The sequence spans 342 residues: Trans-3-hydroxy-L-proline dehydratase (342 aa).

Serine 90 (proton acceptor) is an active-site residue. Residues 91–92 (GS), aspartate 252, and 257–258 (GT) each bind substrate.

It belongs to the proline racemase family.

It carries out the reaction trans-3-hydroxy-L-proline = 1-pyrroline-2-carboxylate + H2O. Catalyzes the dehydration of trans-3-hydroxy-L-proline (t3LHyp) to Delta(1)-pyrroline-2-carboxylate (Pyr2C). Is likely involved in a degradation pathway that converts t3LHyp to L-proline. Displays neither proline racemase activity nor 4-hydroxyproline 2-epimerase activity. This chain is Trans-3-hydroxy-L-proline dehydratase, found in Allorhizobium ampelinum (strain ATCC BAA-846 / DSM 112012 / S4) (Agrobacterium vitis (strain S4)).